The sequence spans 661 residues: Putative lipase ATG15 (661 aa).

The Cytoplasmic portion of the chain corresponds to 1–3 (MIW). Residues 4–24 (NGRLVLACVLLIAGCSGQVDA) form a helical; Signal-anchor for type II membrane protein membrane-spanning segment. The Lumenal portion of the chain corresponds to 25-661 (ARTREQRKAF…FDDFDPKNDL (637 aa)). N-linked (GlcNAc...) asparagine glycosylation is found at Asn-155, Asn-190, Asn-212, Asn-271, and Asn-295. The Charge relay system role is filled by Ser-311. A glycan (N-linked (GlcNAc...) asparagine) is linked at Asn-457. 2 disordered regions span residues 492-559 (ESTT…TSTS) and 574-597 (TTTS…TTTS). Composition is skewed to low complexity over residues 493–513 (STTS…STRT), 527–559 (TTTS…TSTS), and 574–595 (TTTS…TKTT).

Belongs to the AB hydrolase superfamily. Lipase family. In terms of assembly, binds to both phosphatidylinositol (PI) and phosphatidylinositol 3,5-bisphosphate (PIP2).

It is found in the endosome. Its subcellular location is the multivesicular body membrane. The protein resides in the prevacuolar compartment membrane. It catalyses the reaction a triacylglycerol + H2O = a diacylglycerol + a fatty acid + H(+). Functionally, lipase which is essential for lysis of subvacuolar cytoplasm to vacuole targeted bodies and intravacuolar autophagic bodies. Involved in the lysis of intravacuolar multivesicular body (MVB) vesicles. The intravacuolar membrane disintegration by ATG15 is critical to life span extension. The polypeptide is Putative lipase ATG15 (ATG15) (Passalora fulva (Tomato leaf mold)).